A 579-amino-acid chain; its full sequence is Putative truncated flagellar export/assembly protein LfhA (579 aa).

3 helical membrane-spanning segments follow: residues 86-106 (AIAG…IGIF), 124-144 (IGDG…AAII), and 177-197 (FVLA…SALL).

The protein belongs to the FHIPEP (flagella/HR/invasion proteins export pore) family.

Its subcellular location is the cell inner membrane. This chain is Putative truncated flagellar export/assembly protein LfhA, found in Escherichia coli (strain K12).